The following is a 434-amino-acid chain: Adenylosuccinate synthetase (434 aa).

Residues 25-31 and 53-55 contribute to the GTP site; these read GDEGKGK and GHT. Asp-26 serves as the catalytic Proton acceptor. Residues Asp-26 and Gly-53 each coordinate Mg(2+). Residues 26 to 29, 51 to 54, Thr-142, Arg-156, Asn-233, Thr-248, and Arg-312 contribute to the IMP site; these read DEGK and NAGH. His-54 serves as the catalytic Proton donor. 308–314 contacts substrate; the sequence is VTTGRKR. GTP is bound by residues Arg-314, 340–342, and 422–424; these read KLD and GVG.

It belongs to the adenylosuccinate synthetase family. In terms of assembly, homodimer. It depends on Mg(2+) as a cofactor.

Its subcellular location is the cytoplasm. It carries out the reaction IMP + L-aspartate + GTP = N(6)-(1,2-dicarboxyethyl)-AMP + GDP + phosphate + 2 H(+). The protein operates within purine metabolism; AMP biosynthesis via de novo pathway; AMP from IMP: step 1/2. Its function is as follows. Plays an important role in the de novo pathway and in the salvage pathway of purine nucleotide biosynthesis. Catalyzes the first committed step in the biosynthesis of AMP from IMP. In Schizosaccharomyces japonicus (strain yFS275 / FY16936) (Fission yeast), this protein is Adenylosuccinate synthetase.